A 524-amino-acid chain; its full sequence is Bifunctional purine biosynthesis protein PurH (524 aa).

An MGS-like domain is found at 1–144 (MTRRALVSVS…KNSAHVGVVV (144 aa)).

It belongs to the PurH family.

It catalyses the reaction (6R)-10-formyltetrahydrofolate + 5-amino-1-(5-phospho-beta-D-ribosyl)imidazole-4-carboxamide = 5-formamido-1-(5-phospho-D-ribosyl)imidazole-4-carboxamide + (6S)-5,6,7,8-tetrahydrofolate. The enzyme catalyses IMP + H2O = 5-formamido-1-(5-phospho-D-ribosyl)imidazole-4-carboxamide. It functions in the pathway purine metabolism; IMP biosynthesis via de novo pathway; 5-formamido-1-(5-phospho-D-ribosyl)imidazole-4-carboxamide from 5-amino-1-(5-phospho-D-ribosyl)imidazole-4-carboxamide (10-formyl THF route): step 1/1. It participates in purine metabolism; IMP biosynthesis via de novo pathway; IMP from 5-formamido-1-(5-phospho-D-ribosyl)imidazole-4-carboxamide: step 1/1. The polypeptide is Bifunctional purine biosynthesis protein PurH (Anaeromyxobacter dehalogenans (strain 2CP-C)).